The primary structure comprises 150 residues: Ribonuclease K6 (150 aa).

A signal peptide spans 1-23; the sequence is MVLCFPLLLLLLVLWGQVCPLHA. H38 functions as the Proton acceptor in the catalytic mechanism. 4 cysteine pairs are disulfide-bonded: C46–C104, C60–C114, C78–C129, and C85–C92. N-linked (GlcNAc...) asparagine glycosylation occurs at N55. Substrate contacts are provided by residues 61-65 and K86; that span reads KPQNT. N100 carries N-linked (GlcNAc...) asparagine glycosylation. Residue R105 participates in substrate binding. H145 serves as the catalytic Proton donor.

This sequence belongs to the pancreatic ribonuclease family. Interacts (via N-terminus) with bacterial lipopolysaccharide (LPS).

It localises to the secreted. Its subcellular location is the lysosome. The protein resides in the cytoplasmic granule. Functionally, ribonuclease which shows a preference for the pyrimidines uridine and cytosine. Has potent antibacterial activity against a range of Gram-positive and Gram-negative bacteria, including P.aeruginosa, A.baumanii, M.luteus, S.aureus, E.faecalis, E.faecium, S.saprophyticus and E.coli. Causes loss of bacterial membrane integrity, and also promotes agglutination of Gram-negative bacteria. Probably contributes to urinary tract sterility. Bactericidal activity is independent of RNase activity. This is Ribonuclease K6 (RNASE6) from Saimiri sciureus (Common squirrel monkey).